Here is a 183-residue protein sequence, read N- to C-terminus: Ankyrin repeat domain-containing protein 39 (183 aa).

ANK repeat units follow at residues 30–59 (DFER…DPSQ), 63–92 (AGYT…KCDA), 96–125 (GGAT…NPRL), and 129–158 (DGMT…ALKA). Residue Ser-153 is modified to Phosphoserine.

Belongs to the ANKRD39 family.

The protein is Ankyrin repeat domain-containing protein 39 (ANKRD39) of Bos taurus (Bovine).